The primary structure comprises 296 residues: MNKEQLEKMKNGKGFIAALDQSGGSTPKALKEYGVNEDQYSNEDEMFQLVHDMRTRVVTSPSFSPDKILGAILFEQTMDREVEGKYTADYLADKGVVPFLKVDKGLAEEQNGVQLMKPIDNLDSLLDRANERHIFGTKMRSNILELNEQGIKDVVEQQFEVAKQIIAKGLVPIIEPEVNINAKDKAEIEKVLKAELKKGLDSLNADQLVMLKLTIPTEPNLYKELAEHPNVVRVVVLSGGYSREKANELLKDNDELIASFSRALASDLRADQSKEEFDKALGDAVESIYDASVNKN.

Glu175 acts as the Proton acceptor in catalysis. Lys212 functions as the Schiff-base intermediate with dihydroxyacetone-P in the catalytic mechanism.

The protein belongs to the class I fructose-bisphosphate aldolase family.

It carries out the reaction beta-D-fructose 1,6-bisphosphate = D-glyceraldehyde 3-phosphate + dihydroxyacetone phosphate. The protein operates within carbohydrate degradation; glycolysis; D-glyceraldehyde 3-phosphate and glycerone phosphate from D-glucose: step 4/4. The polypeptide is Fructose-bisphosphate aldolase class 1 (Staphylococcus aureus (strain Mu3 / ATCC 700698)).